Consider the following 143-residue polypeptide: Large ribosomal subunit protein bL17 (143 aa).

Residues glycine 124–alanine 133 show a composition bias toward basic and acidic residues. The interval glycine 124–alanine 143 is disordered.

Belongs to the bacterial ribosomal protein bL17 family. Part of the 50S ribosomal subunit. Contacts protein L32.

This chain is Large ribosomal subunit protein bL17, found in Mesorhizobium japonicum (strain LMG 29417 / CECT 9101 / MAFF 303099) (Mesorhizobium loti (strain MAFF 303099)).